A 423-amino-acid polypeptide reads, in one-letter code: Putative competence-damage inducible protein (423 aa).

The protein belongs to the CinA family.

This Streptococcus pyogenes serotype M12 (strain MGAS2096) protein is Putative competence-damage inducible protein.